A 941-amino-acid polypeptide reads, in one-letter code: Myosin heavy chain kinase D (941 aa).

Residues 8-48 (KLSKKIEKILEKNDYLKKKVEQLTKSVDNHEFKIQELLLLL) adopt a coiled-coil conformation. Composition is skewed to low complexity over residues 57–70 (TTTTTTTTTNNNST), 84–115 (TSTDSMTNSNNSSATSSTTPSPTQTSTITTTS), and 124–206 (NSNN…PQLS). 2 disordered regions span residues 57 to 234 (TTTT…KEDS) and 276 to 310 (SSNNTDSTNNDNSSILNDQQNQQQNQQQQNQQQQQ). Residues 289-317 (SILNDQQNQQQNQQQQNQQQQQEEINFIT) adopt a coiled-coil conformation. Residues 337-582 (EYSANDDEWT…ICLQFGLPPI (246 aa)) form the Alpha-type protein kinase domain. 7 WD repeats span residues 635–674 (GHDERVCSLLINQDKTKLYSASADGYVKIWNLTNNEDLSK), 683–720 (AHRRSIEKMLLNEKYLFTASSDGTIKIWSLPTTTTTTT), 741–780 (DHTAEVNDMCIDIENNFLVSCSFDKQIKIYDLSTFKCIKS), 783–820 (AHGKSIKSIYMSGKYLFSSSNDQSIKIWDLEMCMCVYG), 824–861 (AHDAPITSLRMFGNRLFSASKDGEIKDWNLSTFQPTTT), 864–902 (QHNMAITDILVTSNGYLFVSSDDSTIRIIDISNQNEPIK), and 909–941 (AHRSGVNSLATDGKRIFSGGCDNLIKVWNWKNK).

The protein belongs to the protein kinase superfamily. Alpha-type protein kinase family. ALPK subfamily.

The enzyme catalyses L-threonyl-[myosin heavy-chain] + ATP = O-phospho-L-threonyl-[myosin heavy-chain] + ADP + H(+). Its function is as follows. Phosphorylates threonine. Not critical for regulating the assembly and disassembly of myosin II filament. The chain is Myosin heavy chain kinase D (mhkD) from Dictyostelium discoideum (Social amoeba).